Reading from the N-terminus, the 286-residue chain is Ribosomal RNA small subunit methyltransferase A (286 aa).

Asn-28, Leu-30, Gly-55, Glu-77, Asp-103, and Asn-123 together coordinate S-adenosyl-L-methionine.

This sequence belongs to the class I-like SAM-binding methyltransferase superfamily. rRNA adenine N(6)-methyltransferase family. RsmA subfamily.

The protein localises to the cytoplasm. It carries out the reaction adenosine(1518)/adenosine(1519) in 16S rRNA + 4 S-adenosyl-L-methionine = N(6)-dimethyladenosine(1518)/N(6)-dimethyladenosine(1519) in 16S rRNA + 4 S-adenosyl-L-homocysteine + 4 H(+). Its function is as follows. Specifically dimethylates two adjacent adenosines (A1518 and A1519) in the loop of a conserved hairpin near the 3'-end of 16S rRNA in the 30S particle. May play a critical role in biogenesis of 30S subunits. This chain is Ribosomal RNA small subunit methyltransferase A, found in Rhodopseudomonas palustris (strain BisB18).